Consider the following 431-residue polypeptide: Serine/threonine-protein kinase PknA (431 aa).

Residues 1–339 (MSPRVGVTLS…RRTFSSGQRA (339 aa)) lie on the Cytoplasmic side of the membrane. The Protein kinase domain occupies 13 to 272 (YRLQRLIATG…SGGPFADAVA (260 aa)). Residues 19 to 27 (IATGGMGQV) and lysine 42 each bind ATP. Aspartate 141 acts as the Proton acceptor in catalysis. The disordered stretch occupies residues 276-333 (AGRRPPRPSQTPPPGRAAPAAIPSGTTARVAANSAGRTAASRRSRPATGGHRPPRRTF). Residues 282–291 (RPSQTPPPGR) show a composition bias toward pro residues. The segment covering 292–314 (AAPAAIPSGTTARVAANSAGRTA) has biased composition (low complexity). Residues 340-360 (LLWAAGVLGALAIIIAVLLVI) form a helical membrane-spanning segment. The Extracellular segment spans residues 361-431 (KAPGDNSPQQ…ASLARYEIAQ (71 aa)). A disordered region spans residues 366–418 (NSPQQAPTPTVTTTGNPPASNTGGTDASPRLNWTERGETRHSGLQSWVVPPTP). The span at 368-384 (PQQAPTPTVTTTGNPPA) shows a compositional bias: low complexity.

It belongs to the protein kinase superfamily. Ser/Thr protein kinase family. Autophosphorylated.

It localises to the cell membrane. It carries out the reaction L-seryl-[protein] + ATP = O-phospho-L-seryl-[protein] + ADP + H(+). It catalyses the reaction L-threonyl-[protein] + ATP = O-phospho-L-threonyl-[protein] + ADP + H(+). Protein kinase that regulates many aspects of mycobacterial physiology. Is a key component of a signal transduction pathway that regulates cell growth, cell shape and cell division via phosphorylation of target proteins. The protein is Serine/threonine-protein kinase PknA (pknA) of Mycobacterium bovis (strain ATCC BAA-935 / AF2122/97).